The chain runs to 269 residues: tRNA pseudouridine synthase A (269 aa).

Catalysis depends on aspartate 51, which acts as the Nucleophile. Substrate is bound at residue tyrosine 109.

This sequence belongs to the tRNA pseudouridine synthase TruA family. Homodimer.

It catalyses the reaction uridine(38/39/40) in tRNA = pseudouridine(38/39/40) in tRNA. Its function is as follows. Formation of pseudouridine at positions 38, 39 and 40 in the anticodon stem and loop of transfer RNAs. In Haemophilus influenzae (strain ATCC 51907 / DSM 11121 / KW20 / Rd), this protein is tRNA pseudouridine synthase A.